The chain runs to 151 residues: Sec-independent protein translocase protein TatB (151 aa).

The chain crosses the membrane as a helical span at residues 1 to 21 (MFDIGFLELLICGVIALLVLG). 2 stretches are compositionally biased toward basic and acidic residues: residues 87–99 (KYEH…DQTR) and 122–132 (EPPHEPVRDEA). A disordered region spans residues 87–151 (KYEHMILPDD…SPTSPSDKYS (65 aa)). Positions 134-151 (ASDQPSDSSPTSPSDKYS) are enriched in low complexity.

This sequence belongs to the TatB family. The Tat system comprises two distinct complexes: a TatABC complex, containing multiple copies of TatA, TatB and TatC subunits, and a separate TatA complex, containing only TatA subunits. Substrates initially bind to the TatABC complex, which probably triggers association of the separate TatA complex to form the active translocon.

The protein resides in the cell inner membrane. Part of the twin-arginine translocation (Tat) system that transports large folded proteins containing a characteristic twin-arginine motif in their signal peptide across membranes. Together with TatC, TatB is part of a receptor directly interacting with Tat signal peptides. TatB may form an oligomeric binding site that transiently accommodates folded Tat precursor proteins before their translocation. This Marinobacter nauticus (strain ATCC 700491 / DSM 11845 / VT8) (Marinobacter aquaeolei) protein is Sec-independent protein translocase protein TatB.